The following is a 591-amino-acid chain: Cytidine monophosphate-N-acetylneuraminic acid hydroxylase (591 aa).

Residues 16 to 114 (LASAEVESLK…IENDDENGVS (99 aa)) enclose the Rieske domain. [2Fe-2S] cluster is bound by residues Cys-56, His-58, Cys-77, and His-80.

Belongs to the CMP-Neu5Ac hydroxylase family. [2Fe-2S] cluster serves as cofactor.

The protein localises to the cytoplasm. It carries out the reaction CMP-N-acetyl-beta-neuraminate + 2 Fe(II)-[cytochrome b5] + O2 + 2 H(+) = CMP-N-glycoloyl-beta-neuraminate + 2 Fe(III)-[cytochrome b5] + H2O. Its pathway is amino-sugar metabolism; N-acetylneuraminate metabolism. In terms of biological role, sialic acids are components of carbohydrate chains of glycoconjugates and are involved in cell-cell recognition and cell-pathogen interactions. Catalyzes the conversion of CMP-N-acetylneuraminic acid (CMP-Neu5Ac) into its hydroxylated derivative CMP-N-glycolylneuraminic acid (CMP-Neu5Gc), a sialic acid abundantly expressed at the surface of many cells. This Xenopus laevis (African clawed frog) protein is Cytidine monophosphate-N-acetylneuraminic acid hydroxylase (cmah).